The sequence spans 682 residues: DNA ligase (682 aa).

Residues 42 to 46, 88 to 89, and Glu-121 each bind NAD(+); these read DAAYD and SL. The active-site N6-AMP-lysine intermediate is the Lys-123. Residues Arg-144, Glu-180, Lys-291, and Lys-315 each contribute to the NAD(+) site. Residues Cys-409, Cys-412, Cys-427, and Cys-433 each contribute to the Zn(2+) site. The region spanning 601-682 is the BRCT domain; sequence AAGGALAGKT…FRSLAGLPPG (82 aa).

Belongs to the NAD-dependent DNA ligase family. LigA subfamily. Mg(2+) serves as cofactor. The cofactor is Mn(2+).

The enzyme catalyses NAD(+) + (deoxyribonucleotide)n-3'-hydroxyl + 5'-phospho-(deoxyribonucleotide)m = (deoxyribonucleotide)n+m + AMP + beta-nicotinamide D-nucleotide.. In terms of biological role, DNA ligase that catalyzes the formation of phosphodiester linkages between 5'-phosphoryl and 3'-hydroxyl groups in double-stranded DNA using NAD as a coenzyme and as the energy source for the reaction. It is essential for DNA replication and repair of damaged DNA. The sequence is that of DNA ligase from Acidiphilium cryptum (strain JF-5).